A 196-amino-acid chain; its full sequence is Imidazoleglycerol-phosphate dehydratase (196 aa).

The protein belongs to the imidazoleglycerol-phosphate dehydratase family.

The protein resides in the cytoplasm. The catalysed reaction is D-erythro-1-(imidazol-4-yl)glycerol 3-phosphate = 3-(imidazol-4-yl)-2-oxopropyl phosphate + H2O. The protein operates within amino-acid biosynthesis; L-histidine biosynthesis; L-histidine from 5-phospho-alpha-D-ribose 1-diphosphate: step 6/9. The sequence is that of Imidazoleglycerol-phosphate dehydratase from Caulobacter vibrioides (strain ATCC 19089 / CIP 103742 / CB 15) (Caulobacter crescentus).